Here is a 406-residue protein sequence, read N- to C-terminus: Tyrosine--tRNA ligase (406 aa).

An L-tyrosine-binding site is contributed by Tyr-35. Residues 40–49 carry the 'HIGH' region motif; it reads PTADSLHVGH. The L-tyrosine site is built by Tyr-168 and Gln-172. Positions 228-232 match the 'KMSKS' region motif; it reads KMGKT. ATP is bound at residue Lys-231. Residues 340–405 form the S4 RNA-binding domain; that stretch reads STVLDVIAKV…GKKNYNKIEI (66 aa).

The protein belongs to the class-I aminoacyl-tRNA synthetase family. TyrS type 1 subfamily. Homodimer.

It localises to the cytoplasm. It catalyses the reaction tRNA(Tyr) + L-tyrosine + ATP = L-tyrosyl-tRNA(Tyr) + AMP + diphosphate + H(+). Functionally, catalyzes the attachment of tyrosine to tRNA(Tyr) in a two-step reaction: tyrosine is first activated by ATP to form Tyr-AMP and then transferred to the acceptor end of tRNA(Tyr). The protein is Tyrosine--tRNA ligase of Clostridium botulinum (strain Eklund 17B / Type B).